Consider the following 479-residue polypeptide: Aspartyl/glutamyl-tRNA(Asn/Gln) amidotransferase subunit B (479 aa).

This sequence belongs to the GatB/GatE family. GatB subfamily. In terms of assembly, heterotrimer of A, B and C subunits.

It carries out the reaction L-glutamyl-tRNA(Gln) + L-glutamine + ATP + H2O = L-glutaminyl-tRNA(Gln) + L-glutamate + ADP + phosphate + H(+). It catalyses the reaction L-aspartyl-tRNA(Asn) + L-glutamine + ATP + H2O = L-asparaginyl-tRNA(Asn) + L-glutamate + ADP + phosphate + 2 H(+). In terms of biological role, allows the formation of correctly charged Asn-tRNA(Asn) or Gln-tRNA(Gln) through the transamidation of misacylated Asp-tRNA(Asn) or Glu-tRNA(Gln) in organisms which lack either or both of asparaginyl-tRNA or glutaminyl-tRNA synthetases. The reaction takes place in the presence of glutamine and ATP through an activated phospho-Asp-tRNA(Asn) or phospho-Glu-tRNA(Gln). In Halorhodospira halophila (strain DSM 244 / SL1) (Ectothiorhodospira halophila (strain DSM 244 / SL1)), this protein is Aspartyl/glutamyl-tRNA(Asn/Gln) amidotransferase subunit B.